The chain runs to 130 residues: Small ribosomal subunit protein uS8 (130 aa).

This sequence belongs to the universal ribosomal protein uS8 family. As to quaternary structure, part of the 30S ribosomal subunit.

Functionally, one of the primary rRNA binding proteins, it binds directly to 16S rRNA central domain where it helps coordinate assembly of the platform of the 30S subunit. The sequence is that of Small ribosomal subunit protein uS8 from Haloarcula marismortui (strain ATCC 43049 / DSM 3752 / JCM 8966 / VKM B-1809) (Halobacterium marismortui).